The chain runs to 96 residues: UPF0213 protein Lreu_0682 (96 aa).

The 78-residue stretch at 4–81 folds into the GIY-YIG domain; sequence EKYYIYVLYC…KHQTRRQKEK (78 aa).

It belongs to the UPF0213 family.

The sequence is that of UPF0213 protein Lreu_0682 from Limosilactobacillus reuteri (strain DSM 20016) (Lactobacillus reuteri).